The primary structure comprises 348 residues: Protein pelota homolog (348 aa).

This sequence belongs to the eukaryotic release factor 1 family. Pelota subfamily. In terms of assembly, monomer. A divalent metal cation serves as cofactor.

The protein resides in the cytoplasm. In terms of biological role, may function in recognizing stalled ribosomes, interact with stem-loop structures in stalled mRNA molecules, and effect endonucleolytic cleavage of the mRNA. May play a role in the release non-functional ribosomes and degradation of damaged mRNAs. Has endoribonuclease activity. The polypeptide is Protein pelota homolog (Methanococcus vannielii (strain ATCC 35089 / DSM 1224 / JCM 13029 / OCM 148 / SB)).